We begin with the raw amino-acid sequence, 43 residues long: Potassium channel toxin gamma-KTx 4.1 (43 aa).

4 disulfides stabilise this stretch: Cys5-Cys23, Cys11-Cys34, Cys20-Cys39, and Cys24-Cys41.

It belongs to the ergtoxin family. Gamma-KTx 4 subfamily. As to expression, expressed by the venom gland.

The protein resides in the secreted. Functionally, reversibly blocks Kv11/ERG potassium channels. The sequence is that of Potassium channel toxin gamma-KTx 4.1 from Centruroides limpidus (Mexican scorpion).